The primary structure comprises 730 residues: ATP-dependent DNA helicase Hel308 (730 aa).

ATP-binding positions include Gln-28 and 46–53 (IPTASGKT). The 167-residue stretch at 33–199 (EKGLLEGKNL…WLDAELVLSE (167 aa)) folds into the Helicase ATP-binding domain. Positions 144 to 147 (DEVH) match the DEAH box motif. Positions 232 to 433 (AVNLVLDTIK…ALRTHILSTI (202 aa)) constitute a Helicase C-terminal domain.

Belongs to the helicase family. Hel308 subfamily. In terms of assembly, monomer.

The catalysed reaction is Couples ATP hydrolysis with the unwinding of duplex DNA by translocating in the 3'-5' direction.. It catalyses the reaction ATP + H2O = ADP + phosphate + H(+). DNA-dependent ATPase and 3'-5' DNA helicase that may be involved in repair of stalled replication forks. This Methanosarcina mazei (strain ATCC BAA-159 / DSM 3647 / Goe1 / Go1 / JCM 11833 / OCM 88) (Methanosarcina frisia) protein is ATP-dependent DNA helicase Hel308.